We begin with the raw amino-acid sequence, 196 residues long: DnaA initiator-associating protein DiaA (196 aa).

The SIS domain occupies 34 to 196 (LVQSLLNGNK…DNTLFPHQND (163 aa)).

The protein belongs to the SIS family. DiaA subfamily. As to quaternary structure, homotetramer; dimer of dimers.

Functionally, required for the timely initiation of chromosomal replication via direct interactions with the DnaA initiator protein. In Yersinia pestis bv. Antiqua (strain Antiqua), this protein is DnaA initiator-associating protein DiaA.